The sequence spans 459 residues: Precorrin-3B synthase (459 aa).

[4Fe-4S] cluster is bound by residues cysteine 338, cysteine 344, cysteine 377, and cysteine 381. Position 381 (cysteine 381) interacts with siroheme.

Belongs to the nitrite and sulfite reductase 4Fe-4S domain family.

It carries out the reaction precorrin-3A + NADH + O2 + 2 H(+) = precorrin-3B + NAD(+) + H2O. It participates in cofactor biosynthesis; adenosylcobalamin biosynthesis; cob(II)yrinate a,c-diamide from precorrin-2 (aerobic route): step 2/10. Its function is as follows. Catalyzes the elimination of C-20 in precorrin-3A to form precorrin-3B. The sequence is that of Precorrin-3B synthase (cobG) from Sinorhizobium sp.